The chain runs to 399 residues: CCA-adding enzyme (399 aa).

Residues Gly32 and Arg35 each contribute to the ATP site. CTP-binding residues include Gly32 and Arg35. The Mg(2+) site is built by Asp45 and Asp47. The ATP site is built by Arg116, Asp159, Arg162, Arg165, and Arg168. CTP contacts are provided by Arg116, Asp159, Arg162, Arg165, and Arg168.

This sequence belongs to the tRNA nucleotidyltransferase/poly(A) polymerase family. Bacterial CCA-adding enzyme type 3 subfamily. In terms of assembly, homodimer. Mg(2+) is required as a cofactor.

The catalysed reaction is a tRNA precursor + 2 CTP + ATP = a tRNA with a 3' CCA end + 3 diphosphate. It carries out the reaction a tRNA with a 3' CCA end + 2 CTP + ATP = a tRNA with a 3' CCACCA end + 3 diphosphate. Its function is as follows. Catalyzes the addition and repair of the essential 3'-terminal CCA sequence in tRNAs without using a nucleic acid template. Adds these three nucleotides in the order of C, C, and A to the tRNA nucleotide-73, using CTP and ATP as substrates and producing inorganic pyrophosphate. tRNA 3'-terminal CCA addition is required both for tRNA processing and repair. Also involved in tRNA surveillance by mediating tandem CCA addition to generate a CCACCA at the 3' terminus of unstable tRNAs. While stable tRNAs receive only 3'-terminal CCA, unstable tRNAs are marked with CCACCA and rapidly degraded. This chain is CCA-adding enzyme, found in Streptococcus pneumoniae serotype 19F (strain G54).